The chain runs to 270 residues: Bacterial microcompartment shell protein PduB (270 aa).

BMC circularly permuted domains are found at residues 47–152 (EFVG…DRTF) and 154–262 (DVYA…GSEP).

The protein belongs to the EutL/PduB family. In terms of assembly, homotrimerizes to form a pseudohexamer with a central pore. The trimers pack into an array. Both forms interact with shell protein PduA. In terms of processing, in purified BMCs seen as a 30.0 kDa and 25.0 kDa form; the smaller form is called PduB'.

It localises to the bacterial microcompartment. Its pathway is polyol metabolism; 1,2-propanediol degradation. The two proteins produced are among the major shell proteins of the bacterial microcompartment (BMC) shell dedicated to 1,2-propanediol (1,2-PD) degradation. Overexpression of the gene gives large amorphous intracellular structures; when only PduB is overexpressed large circular bodies are observed which contain concentric rings, whereas with PduB' overexpression internal bodies with regular straight-lined structures were generated. The N-terminus of the long form (PduB) is required for correct formation of BMCs. May play a major role in binding the enzyme contents to the shell. Functionally, expression of a cosmid containing the full 21-gene pdu operon in E.coli allows E.coli to grow on 1,2-propanediol (1,2-PD) with the appearance of BMCs in its cytoplasm. Its function is as follows. The 1,2-PD-specific bacterial microcompartment (BMC) concentrates low levels of 1,2-PD catabolic enzymes, concentrates volatile reaction intermediates thus enhancing pathway flux and keeps the level of toxic, mutagenic propionaldehyde low. The chain is Bacterial microcompartment shell protein PduB from Citrobacter freundii.